A 539-amino-acid polypeptide reads, in one-letter code: Netrin-G1 (539 aa).

The N-terminal stretch at 1 to 28 (MYLSRFLSIHALWVTVSSVMQPYPLVWG) is a signal peptide. Cystine bridges form between cysteine 33–cysteine 50, cysteine 72–cysteine 92, and cysteine 80–cysteine 88. A Laminin N-terminal domain is found at 46–296 (DYMACQPEST…AISDIKVRGR (251 aa)). Residues 80-91 (CAMGNPYMCNNE) are NGL discriminant loop I. An N-linked (GlcNAc...) asparagine glycan is attached at asparagine 133. Residues cysteine 182 and cysteine 206 are joined by a disulfide bond. Residues 208–214 (EEYSTGY) are NGL discriminant loop II. The segment at 273-275 (EIF) is NGL discriminant loop III. Intrachain disulfides connect cysteine 297/cysteine 306, cysteine 299/cysteine 315, cysteine 317/cysteine 326, cysteine 329/cysteine 354, cysteine 364/cysteine 373, cysteine 366/cysteine 384, cysteine 387/cysteine 396, cysteine 399/cysteine 417, cysteine 420/cysteine 432, cysteine 422/cysteine 438, cysteine 440/cysteine 449, cysteine 452/cysteine 462, cysteine 467/cysteine 480, cysteine 474/cysteine 486, and cysteine 488/cysteine 497. Laminin EGF-like domains lie at 297-356 (CKCN…TCIP), 364-419 (CECF…VCIE), and 420-469 (CYCN…VCDN). Asparagine 320 is a glycosylation site (N-linked (GlcNAc...) asparagine). Asparagine 406 carries N-linked (GlcNAc...) asparagine glycosylation. Asparagine 433 is a glycosylation site (N-linked (GlcNAc...) asparagine). Residue serine 510 is the site of GPI-anchor amidated serine attachment. Positions 511-539 (DSGQGAPPHGSPALLLLTTLLGTASPLVF) are cleaved as a propeptide — removed in mature form.

Interacts with NGL1. Post-translationally, N-glycosylated. Highly expressed in the thalamus, with very low expression, if any, in other tissues.

It localises to the cell membrane. In terms of biological role, involved in controlling patterning and neuronal circuit formation at the laminar, cellular, subcellular and synaptic levels. Promotes neurite outgrowth of both axons and dendrites. The polypeptide is Netrin-G1 (NTNG1) (Homo sapiens (Human)).